A 441-amino-acid polypeptide reads, in one-letter code: Chitinase-like protein Idgf3 (441 aa).

An N-terminal signal peptide occupies residues 1–23; sequence MTGSLWLSLALSLAVLAQFKVSA. The GH18 domain occupies 25 to 441; that stretch reads PNLVCFYDSQ…MLRAIKYRLL (417 aa). Residues C29 and C56 are joined by a disulfide bond. An N-linked (GlcNAc...) asparagine glycan is attached at N221. The tract at residues 309–331 is disordered; that stretch reads SGDSGMPVVPSTQGPAPAGPQSK. An intrachain disulfide couples C342 to C425.

This sequence belongs to the glycosyl hydrolase 18 family. IDGF subfamily. In terms of processing, glycosylated.

The protein localises to the secreted. In terms of biological role, cooperates with insulin-like peptides to stimulate the proliferation, polarization and motility of imaginal disk cells. May act by stabilizing the binding of insulin-like peptides to its receptor through a simultaneous interaction with both molecules to form a multiprotein signaling complex. In Drosophila yakuba (Fruit fly), this protein is Chitinase-like protein Idgf3 (Idgf3).